The chain runs to 62 residues: Photosystem II reaction center protein Z (62 aa).

Helical transmembrane passes span 8 to 28 (LVLLLIALSTVLVVGVPVVLA) and 41 to 61 (YTGAGLWTGLVIVTSLVNSLV).

It belongs to the PsbZ family. PSII is composed of 1 copy each of membrane proteins PsbA, PsbB, PsbC, PsbD, PsbE, PsbF, PsbH, PsbI, PsbJ, PsbK, PsbL, PsbM, PsbT, PsbX, PsbY, PsbZ, Psb30/Ycf12, at least 3 peripheral proteins of the oxygen-evolving complex and a large number of cofactors. It forms dimeric complexes.

The protein resides in the plastid. The protein localises to the chloroplast thylakoid membrane. May control the interaction of photosystem II (PSII) cores with the light-harvesting antenna, regulates electron flow through the 2 photosystem reaction centers. PSII is a light-driven water plastoquinone oxidoreductase, using light energy to abstract electrons from H(2)O, generating a proton gradient subsequently used for ATP formation. In Pyropia yezoensis (Susabi-nori), this protein is Photosystem II reaction center protein Z.